The primary structure comprises 393 residues: Formate-dependent phosphoribosylglycinamide formyltransferase (393 aa).

N(1)-(5-phospho-beta-D-ribosyl)glycinamide-binding positions include 22-23 (EL) and Glu-82. Residues Arg-114, Lys-155, 160-165 (SSGKGQ), 195-198 (EGFI), and Glu-203 contribute to the ATP site. The ATP-grasp domain maps to 119–308 (RLAAEELDLP…QFALHARAIL (190 aa)). Mg(2+)-binding residues include Glu-267 and Glu-279. Residues Asp-286, Lys-356, and 363-364 (RR) each bind N(1)-(5-phospho-beta-D-ribosyl)glycinamide.

Belongs to the PurK/PurT family. As to quaternary structure, homodimer.

It carries out the reaction N(1)-(5-phospho-beta-D-ribosyl)glycinamide + formate + ATP = N(2)-formyl-N(1)-(5-phospho-beta-D-ribosyl)glycinamide + ADP + phosphate + H(+). It participates in purine metabolism; IMP biosynthesis via de novo pathway; N(2)-formyl-N(1)-(5-phospho-D-ribosyl)glycinamide from N(1)-(5-phospho-D-ribosyl)glycinamide (formate route): step 1/1. Its function is as follows. Involved in the de novo purine biosynthesis. Catalyzes the transfer of formate to 5-phospho-ribosyl-glycinamide (GAR), producing 5-phospho-ribosyl-N-formylglycinamide (FGAR). Formate is provided by PurU via hydrolysis of 10-formyl-tetrahydrofolate. In Pseudomonas putida (strain W619), this protein is Formate-dependent phosphoribosylglycinamide formyltransferase.